The sequence spans 71 residues: Large ribosomal subunit protein uL29 (71 aa).

It belongs to the universal ribosomal protein uL29 family.

This Rickettsia massiliae (strain Mtu5) protein is Large ribosomal subunit protein uL29.